We begin with the raw amino-acid sequence, 271 residues long: Acetylglutamate kinase (271 aa).

Substrate-binding positions include 41–42 (GG), arginine 63, and asparagine 166.

This sequence belongs to the acetylglutamate kinase family. ArgB subfamily.

Its subcellular location is the cytoplasm. The catalysed reaction is N-acetyl-L-glutamate + ATP = N-acetyl-L-glutamyl 5-phosphate + ADP. It functions in the pathway amino-acid biosynthesis; L-arginine biosynthesis; N(2)-acetyl-L-ornithine from L-glutamate: step 2/4. In terms of biological role, catalyzes the ATP-dependent phosphorylation of N-acetyl-L-glutamate. This Anaeromyxobacter sp. (strain Fw109-5) protein is Acetylglutamate kinase.